The primary structure comprises 115 residues: MKFVLLFGVLLLTLFSYSSAEMLDDFDQADEDELLSLIEKEEARAKECTPRFYDCSHDRHSCCRSELFKDVCTCFYPEGGDNEVCTCQQPKHLKYMEKAADKAKKFGGKIKKWFG.

The first 20 residues, 1–20 (MKFVLLFGVLLLTLFSYSSA), serve as a signal peptide directing secretion. Positions 21-44 (EMLDDFDQADEDELLSLIEKEEAR) are excised as a propeptide. 4 disulfides stabilise this stretch: cysteine 48–cysteine 63, cysteine 55–cysteine 72, cysteine 62–cysteine 87, and cysteine 74–cysteine 85.

This sequence belongs to the neurotoxin 19 (CSTX) family. 01 subfamily. Expressed by the venom gland.

Its subcellular location is the secreted. This Lycosa singoriensis (Wolf spider) protein is U3-lycotoxin-Ls1a.